A 316-amino-acid chain; its full sequence is Putative HTH-type transcriptional regulatory protein PYRAB03670 (316 aa).

One can recognise an HTH cro/C1-type domain in the interval 131–189; the sequence is LKDLREKHGYSLSELANILGVSRKSLQRYEKGDSMVTLEVALRLEEVFDEALVKPINVL. Positions 142-161 form a DNA-binding region, H-T-H motif; the sequence is LSELANILGVSRKSLQRYEK.

In Pyrococcus abyssi (strain GE5 / Orsay), this protein is Putative HTH-type transcriptional regulatory protein PYRAB03670.